The primary structure comprises 445 residues: GTPase Der (445 aa).

2 EngA-type G domains span residues 3–167 (PVIA…YAGQ) and 180–353 (IKIA…AAAM). Residues 9-16 (GRPNVGKS), 56-60 (DTGGF), 119-122 (NKAE), 186-193 (GRPNVGKS), 233-237 (DTAGL), and 298-301 (NKWD) each bind GTP. The KH-like domain occupies 354–438 (SKLPTPKLTR…PLRIEFRSSN (85 aa)).

This sequence belongs to the TRAFAC class TrmE-Era-EngA-EngB-Septin-like GTPase superfamily. EngA (Der) GTPase family. Associates with the 50S ribosomal subunit.

GTPase that plays an essential role in the late steps of ribosome biogenesis. The sequence is that of GTPase Der from Burkholderia cenocepacia (strain ATCC BAA-245 / DSM 16553 / LMG 16656 / NCTC 13227 / J2315 / CF5610) (Burkholderia cepacia (strain J2315)).